The sequence spans 559 residues: ATP synthase subunit beta-3, mitochondrial (559 aa).

Positions 1–28 (MASRRILSSLLRSSSSRSTSKSSLIGSR) are enriched in low complexity. The disordered stretch occupies residues 1–39 (MASRRILSSLLRSSSSRSTSKSSLIGSRNPRLLSPGPAH). Residues 1–54 (MASRRILSSLLRSSSSRSTSKSSLIGSRNPRLLSPGPAHGAAPCGTLLGRVAEY) constitute a mitochondrion transit peptide. Position 62 is a phosphoserine (Ser62). 234 to 241 (GGAGVGKT) is a binding site for ATP.

Belongs to the ATPase alpha/beta chains family. F-type ATPases have 2 components, CF(1) - the catalytic core - and CF(0) - the membrane proton channel. CF(1) has five subunits: alpha(3), beta(3), gamma(1), delta(1), epsilon(1). CF(0) has three main subunits: a, b and c.

Its subcellular location is the mitochondrion. It localises to the mitochondrion inner membrane. The enzyme catalyses ATP + H2O + 4 H(+)(in) = ADP + phosphate + 5 H(+)(out). Functionally, mitochondrial membrane ATP synthase (F(1)F(0) ATP synthase or Complex V) produces ATP from ADP in the presence of a proton gradient across the membrane which is generated by electron transport complexes of the respiratory chain. F-type ATPases consist of two structural domains, F(1) - containing the extramembraneous catalytic core, and F(0) - containing the membrane proton channel, linked together by a central stalk and a peripheral stalk. During catalysis, ATP synthesis in the catalytic domain of F(1) is coupled via a rotary mechanism of the central stalk subunits to proton translocation. Subunits alpha and beta form the catalytic core in F(1). Rotation of the central stalk against the surrounding alpha(3)beta(3) subunits leads to hydrolysis of ATP in three separate catalytic sites on the beta subunits. The protein is ATP synthase subunit beta-3, mitochondrial of Arabidopsis thaliana (Mouse-ear cress).